Consider the following 311-residue polypeptide: tRNA dimethylallyltransferase (311 aa).

9–16 (GPTAVGKT) contributes to the ATP binding site. 11 to 16 (TAVGKT) contacts substrate. The interval 34 to 37 (DSMQ) is interaction with substrate tRNA.

It belongs to the IPP transferase family. As to quaternary structure, monomer. Requires Mg(2+) as cofactor.

The enzyme catalyses adenosine(37) in tRNA + dimethylallyl diphosphate = N(6)-dimethylallyladenosine(37) in tRNA + diphosphate. Functionally, catalyzes the transfer of a dimethylallyl group onto the adenine at position 37 in tRNAs that read codons beginning with uridine, leading to the formation of N6-(dimethylallyl)adenosine (i(6)A). This Clostridium botulinum (strain Loch Maree / Type A3) protein is tRNA dimethylallyltransferase.